A 240-amino-acid chain; its full sequence is 1-(5-phosphoribosyl)-5-[(5-phosphoribosylamino)methylideneamino] imidazole-4-carboxamide isomerase (240 aa).

The active-site Proton acceptor is the aspartate 8. Residue aspartate 130 is the Proton donor of the active site.

It belongs to the HisA/HisF family.

Its subcellular location is the cytoplasm. It carries out the reaction 1-(5-phospho-beta-D-ribosyl)-5-[(5-phospho-beta-D-ribosylamino)methylideneamino]imidazole-4-carboxamide = 5-[(5-phospho-1-deoxy-D-ribulos-1-ylimino)methylamino]-1-(5-phospho-beta-D-ribosyl)imidazole-4-carboxamide. It participates in amino-acid biosynthesis; L-histidine biosynthesis; L-histidine from 5-phospho-alpha-D-ribose 1-diphosphate: step 4/9. The sequence is that of 1-(5-phosphoribosyl)-5-[(5-phosphoribosylamino)methylideneamino] imidazole-4-carboxamide isomerase from Flavobacterium johnsoniae (strain ATCC 17061 / DSM 2064 / JCM 8514 / BCRC 14874 / CCUG 350202 / NBRC 14942 / NCIMB 11054 / UW101) (Cytophaga johnsonae).